The chain runs to 338 residues: Lipoate-protein ligase A (338 aa).

A BPL/LPL catalytic domain is found at 29-216 (PATQRVLFLW…AFFAHYGERV (188 aa)). Residues R71, 76-79 (GAVF), and K134 contribute to the ATP site. Residue K134 coordinates (R)-lipoate.

The protein belongs to the LplA family. Monomer.

It is found in the cytoplasm. The catalysed reaction is L-lysyl-[lipoyl-carrier protein] + (R)-lipoate + ATP = N(6)-[(R)-lipoyl]-L-lysyl-[lipoyl-carrier protein] + AMP + diphosphate + H(+). The protein operates within protein modification; protein lipoylation via exogenous pathway; protein N(6)-(lipoyl)lysine from lipoate: step 1/2. Its pathway is protein modification; protein lipoylation via exogenous pathway; protein N(6)-(lipoyl)lysine from lipoate: step 2/2. Functionally, catalyzes both the ATP-dependent activation of exogenously supplied lipoate to lipoyl-AMP and the transfer of the activated lipoyl onto the lipoyl domains of lipoate-dependent enzymes. This chain is Lipoate-protein ligase A, found in Shigella dysenteriae serotype 1 (strain Sd197).